The following is a 457-amino-acid chain: Embryogenesis-associated protein EMB8 (457 aa).

The disordered stretch occupies residues 39-59 (KKPAAGACEEQDELTSGSAAR). Positions 151–391 (PVLILLPGLT…LVVTPNGGHL (241 aa)) constitute an AB hydrolase-1 domain. Catalysis depends on charge relay system residues serine 231, aspartate 361, and histidine 390. Over residues 438–447 (VDSVHTRETN) the composition is skewed to basic and acidic residues. The disordered stretch occupies residues 438-457 (VDSVHTRETNNYKSPIENVN). Residues 448–457 (NYKSPIENVN) are compositionally biased toward polar residues.

This sequence belongs to the AB hydrolase superfamily. AB hydrolase 4 family.

The protein is Embryogenesis-associated protein EMB8 (EMB8) of Picea glauca (White spruce).